We begin with the raw amino-acid sequence, 85 residues long: Anti-neuroexcitation peptide 2 (85 aa).

Residues 1–21 (MKLSLLLVISASMLIDGLVNA) form the signal peptide. The 61-residue stretch at 22–82 (DGYIRGSNGC…TWKSESNTCG (61 aa)) folds into the LCN-type CS-alpha/beta domain. Cystine bridges form between C31–C81, C35–C56, C42–C63, and C46–C65.

Belongs to the long (4 C-C) scorpion toxin superfamily. Sodium channel inhibitor family. Beta subfamily. Expressed by the venom gland.

The protein resides in the secreted. Functionally, binds to sodium channels (Nav) and inhibits them. Recombinant ANEP delays the convulsion seizure of insect models by 18% and shows anti-neuroexcitatory activity. This Olivierus martensii (Manchurian scorpion) protein is Anti-neuroexcitation peptide 2.